An 841-amino-acid chain; its full sequence is SLIT and NTRK-like protein 6 (841 aa).

Positions 1-26 (MKLWIHLFYSSLLACISLHSQTPVLS) are cleaved as a signal peptide. In terms of domain architecture, LRRNT 1 spans 27-67 (SRGSCDSLCNCEEKDGTMLINCEAKGIKMVSEISVPPSRPF). Residues 27–608 (SRGSCDSLCN…RSLTDAVPLS (582 aa)) lie on the Extracellular side of the membrane. LRR repeat units lie at residues 89-110 (NAIS…AFNG), 113-134 (LLKQ…TFHG), 137-158 (NLEF…AFSK), 161-182 (RLKV…IFRF), and 184-205 (PLTH…GFLE). One can recognise an LRRCT 1 domain in the interval 218–269 (NKWACNCDLLQLKTWLENMPPQSIIGDVVCNSPPFFKGSILSRLKKESICPT). The region spanning 320-361 (PSTQLPGPYCPIPCNCKVLSPSGLLIHCQERNIESLSDLRPP) is the LRRNT 2 domain. LRR repeat units lie at residues 364–385 (NPRK…DLVE), 388–409 (TLEM…SFMN), 412–433 (RLQK…MFLG), 436–457 (NLEY…TFNP), 460–481 (KLKV…IFSG), and 483–504 (PLTK…NILD). Residues 517-568 (NPWDCSCDLVGLQQWIQKLSKNTVTDDILCTSPGHLDKKELKALNSEILCPG) enclose the LRRCT 2 domain. Residues 609–629 (VLILGLLIMFITIVFCAAGIV) traverse the membrane as a helical segment. Residues 630 to 841 (VLVLHRRRRY…DYLEVLEQQT (212 aa)) are Cytoplasmic-facing.

This sequence belongs to the SLITRK family. In terms of tissue distribution, in adult brain, highly expressed in putamen with no expression in cerebral cortex. Expressed in adult and fetal lung and fetal liver. Also expressed at high levels in some brain tumors including medulloblastomas and primitive neuroectodermal tumors.

It localises to the cell membrane. Regulator of neurite outgrowth required for normal hearing and vision. The protein is SLIT and NTRK-like protein 6 (SLITRK6) of Homo sapiens (Human).